Reading from the N-terminus, the 269-residue chain is Type II iodothyronine deiodinase (269 aa).

At 1–9 (MGILSVDLL) the chain is on the lumenal side. Residues 10–34 (ITLQILPVFFSNCLFLALYDSVILL) traverse the membrane as a helical; Signal-anchor for type III membrane protein segment. At 35-269 (KHVVLLLSRS…KNFSKRUKLD (235 aa)) the chain is on the cytoplasmic side. Residues 83–103 (NSSVVHVSSPEGGDTSGNGAQ) are disordered. U133 is an active-site residue. 2 non-standard amino acids (selenocysteine) are found at residues U133 and U266.

It belongs to the iodothyronine deiodinase family. In terms of assembly, predominantly monomer. Can form homodimers but homodimerization is not essential for enzyme activity. Interacts with USP20 and USP33. Interacts with MARCHF6. Post-translationally, ubiquitinated by MARCHF6, leading to its degradation by the proteasome. Deubiquitinated by USP20 and USP33. As to expression, highly expressed in thyroid, mammary and pituitary glands, then in hypothalamus. Low levels detected in diaphragm, heart, kidney and lung.

Its subcellular location is the endoplasmic reticulum membrane. The enzyme catalyses 3,3',5-triiodo-L-thyronine + iodide + A + H(+) = L-thyroxine + AH2. It carries out the reaction 3,3'-diiodo-L-thyronine + iodide + A + H(+) = 3,3',5'-triiodo-L-thyronine + AH2. The catalysed reaction is 3'-iodo-L-thyronine + iodide + A + H(+) = 3',5'-diiodo-L-thyronine + AH2. It catalyses the reaction 3,3'-diiodothyronamine + iodide + A + H(+) = 3,3',5'-triiodothyronamine + AH2. The enzyme catalyses 3'-iodothyronamine + iodide + A + H(+) = 3',5'-diiodothyronamine + AH2. In terms of biological role, plays a crucial role in the metabolism of thyroid hormones (TH) and has specific roles in TH activation and inactivation by deiodination. Catalyzes the deiodination of L-thyroxine (T4) to 3,5,3'-triiodothyronine (T3), 3,3',5'-triiodothyronine (rT3) to 3,3'-diiodothyronine (3,3'-T2) and 3',5'-diiodothyronine (3',5'-T2) to 3'-monoiodothyronine (3'-T1) via outer-ring deiodination (ORD). Catalyzes the phenolic ring deiodinations of 3,3',5'-triiodothyronamine and 3',5'- diiodothyronamine. The sequence is that of Type II iodothyronine deiodinase (DIO2) from Bos taurus (Bovine).